Consider the following 370-residue polypeptide: Calcium-binding protein 1 (370 aa).

Residues 1-198 (MGGGDGAAFK…GRGDSVPAAA (198 aa)) are disordered. Gly-2 carries the N-myristoyl glycine lipid modification. Gly-4 carries S-palmitoyl cysteine lipidation. 3 stretches are compositionally biased toward low complexity: residues 50–61 (HASAGPAAMSSH), 68–84 (KTSL…GGSR), and 148–157 (ALPAAASRPS). EF-hand domains follow at residues 225–260 (EEIE…MGYM), 279–296 (GHVD…KLLA), 302–337 (IGVK…LLGH), and 339–370 (VGHR…MMSR). Ca(2+)-binding residues include Asp-238, Asp-240, Asp-242, Tyr-244, and Asp-249. Residues Asp-238, Asp-240, Asp-242, and Tyr-244 each contribute to the Mg(2+) site. Residues Asp-315, Asn-317, Asp-319, and Glu-321 each contribute to the Ca(2+) site. At Ser-323 the chain carries Phosphoserine. Ca(2+) contacts are provided by Glu-326, Asp-352, Leu-353, Asn-354, Asp-356, Gly-357, Arg-358, Asp-360, and Glu-363.

As to quaternary structure, homodimer; when bound to calcium or magnesium. Interacts (via C-terminus) with ITPR1, ITPR2 and ITPR3. This binding is calcium dependent and the interaction correlates with calcium concentration. An additional calcium-independent interaction with the N-terminus of ITPR1 results in a decreased InsP(3) binding to the receptor. Interacts with CACNA1A (via C-terminal CDB motif) in the pre- and postsynaptic membranes. Interacts with CACNA1C (via C-terminal C and IQ motifs). The binding to the C motif is calcium independent whereas the binding to IQ requires the presence of calcium and is mutually exclusive with calmodulin binding. Interacts with CACNA1D. Interacts with TRPC5 (via C-terminus). Interacts (via EF-hands 1 and 2) at microtubules with MAP1LC3B. Interacts with MYO1C. Interacts (via EF-hands 1 and 2) with NSMF (via the central NLS-containing motif region), the interaction occurs in a calcium dependent manner after synaptic NMDA receptor stimulation and prevents nuclear import of NSMF. Interacts with SPACA9. Post-translationally, phosphorylated. The phosphorylation regulates the activity. In terms of tissue distribution, retina and brain. Somatodendritic compartment of neurons. Calbrain was found exclusively in brain where it is abundant in the hippocampus, habenular area in the epithalamus and in the cerebellum.

Its subcellular location is the cytoplasm. It localises to the cytoskeleton. It is found in the perinuclear region. The protein localises to the cell membrane. The protein resides in the golgi apparatus. Its subcellular location is the postsynaptic density. It localises to the cell cortex. Functionally, modulates calcium-dependent activity of inositol 1,4,5-triphosphate receptors (ITPRs). Inhibits agonist-induced intracellular calcium signaling. Enhances inactivation and does not support calcium-dependent facilitation of voltage-dependent P/Q-type calcium channels. Causes calcium-dependent facilitation and inhibits inactivation of L-type calcium channels by binding to the same sites as calmodulin in the C-terminal domain of CACNA1C, but has an opposite effect on channel function. Suppresses the calcium-dependent inactivation of CACNA1D. Inhibits TRPC5 channels. Prevents NMDA receptor-induced cellular degeneration. Required for the normal transfer of light signals through the retina. The sequence is that of Calcium-binding protein 1 (CABP1) from Homo sapiens (Human).